The following is a 274-amino-acid chain: Undecaprenyl-diphosphatase (274 aa).

8 helical membrane passes run 1 to 21, 48 to 68, 84 to 104, 108 to 128, 143 to 163, 187 to 207, 214 to 234, and 254 to 274; these read MDWFYAIIYGIVEGITEFLPI, VVIQGGAILAVLAYYWRDFAG, LGVIVGVIPAVVLGVLFGDVI, LFRPSVVAWALIVGGVLMWVI, IGLGRAFLIGAAQCLALLWPG, FSFYLGIPTLGGAALLDFIKS, IGLLNVFLGAAVSFVVAYLAI, and VIFGLLILLLVASGRLANGGL.

This sequence belongs to the UppP family.

It localises to the cell membrane. It carries out the reaction di-trans,octa-cis-undecaprenyl diphosphate + H2O = di-trans,octa-cis-undecaprenyl phosphate + phosphate + H(+). Its function is as follows. Catalyzes the dephosphorylation of undecaprenyl diphosphate (UPP). Confers resistance to bacitracin. The protein is Undecaprenyl-diphosphatase of Deinococcus geothermalis (strain DSM 11300 / CIP 105573 / AG-3a).